Here is a 532-residue protein sequence, read N- to C-terminus: ATP-dependent RNA helicase DBP3 (532 aa).

The tract at residues 1–78 (MGKRDRTEDD…EVAEEKPKMT (78 aa)) is disordered. The span at 15–58 (KKVKLDKKDKKEKKEKKDKKDKKDKKDKKDKKDKKEKKEKKEKK) shows a compositional bias: basic residues. A Q motif motif is present at residues 126 to 152 (MEFSHVTLDPRITKVLTKFPRPTPIQA). Residues 155-327 (WPYLLAGKDM…EGFMKTPTKV (173 aa)) enclose the Helicase ATP-binding domain. ATP is bound at residue 168–175 (AETGSGKT). The DEAD box signature appears at 274-277 (DEAD). A Helicase C-terminal domain is found at 356-502 (RLLDLLRQYA…PVPDELLKFG (147 aa)).

It belongs to the DEAD box helicase family. DDX5/DBP2 subfamily.

It is found in the nucleus. Its subcellular location is the nucleolus. The catalysed reaction is ATP + H2O = ADP + phosphate + H(+). In terms of biological role, ATP-dependent RNA helicase required for 60S ribosomal subunit synthesis. Involved in efficient pre-rRNA processing, predominantly at site A3, which is necessary for the normal formation of 25S and 5.8S rRNAs. The protein is ATP-dependent RNA helicase DBP3 (DBP3) of Yarrowia lipolytica (strain CLIB 122 / E 150) (Yeast).